We begin with the raw amino-acid sequence, 620 residues long: Ran-binding protein 10 (620 aa).

The segment at 1 to 41 (MAAATADPGAGNPQPGDSSGGGAGGGLPSPGEQELSRRLQR) is disordered. Residue Ala-2 is modified to N-acetylalanine. Positions 18-28 (SSGGGAGGGLP) are enriched in gly residues. The region spanning 35-222 (LSRRLQRLYP…VDANFGQQPF (188 aa)) is the B30.2/SPRY domain. One can recognise a LisH domain in the interval 253-285 (WQAVLQNMVSSYLVHHGYCATATAFARMTETPI). In terms of domain architecture, CTLH spans 291 to 348 (SIKNRQKIQKLVLEGRVGEAIETTQRFYPGLLEHNPNLLFMLKCRQFVEMVNGTDSEV). Residues 347–398 (EVRSLSSRSPKSQDSYPGSPSLSPRHGPSSSHMHNTGADSPSCSNGVASTKS) are compositionally biased toward polar residues. A disordered region spans residues 347 to 458 (EVRSLSSRSP…ETSDSEMEME (112 aa)). Position 361 is a phosphoserine (Ser-361). The residue at position 362 (Tyr-362) is a Phosphotyrosine. 6 positions are modified to phosphoserine: Ser-365, Ser-367, Ser-369, Ser-422, Ser-451, and Ser-453. The segment covering 409–436 (SSSSSSSSSSSSSSPSSVNYSESNSTDS) has biased composition (low complexity).

Belongs to the RANBP9/10 family. May form homodimers. Identified in the CTLH complex that contains GID4, RANBP9 and/or RANBP10, MKLN1, MAEA, RMND5A (or alternatively its paralog RMND5B), GID8, ARMC8, WDR26 and YPEL5. Within this complex, MAEA, RMND5A (or alternatively its paralog RMND5B), GID8, WDR26, and RANBP9 and/or RANBP10 form the catalytic core, while GID4, MKLN1, ARMC8 and YPEL5 have ancillary roles. Interacts with RAN and RANBP9. Interacts with the HGF receptor MET. Interacts with AR. Interacts with TUBB1. Interacts with YPEL5. May interact with TUBB5. Interacts with DDX4. Broadly expressed, with highest levels in skeletal muscle.

It localises to the cytoplasm. It is found in the cytosol. The protein localises to the nucleus. In terms of biological role, may act as an adapter protein to couple membrane receptors to intracellular signaling pathways. Core component of the CTLH E3 ubiquitin-protein ligase complex that selectively accepts ubiquitin from UBE2H and mediates ubiquitination and subsequent proteasomal degradation of the transcription factor HBP1. Enhances dihydrotestosterone-induced transactivation activity of AR, as well as dexamethasone-induced transactivation activity of NR3C1, but does not affect estrogen-induced transactivation. Acts as a guanine nucleotide exchange factor (GEF) for RAN GTPase. May play an essential role in hemostasis and in maintaining microtubule dynamics with respect to both platelet shape and function. This Homo sapiens (Human) protein is Ran-binding protein 10 (RANBP10).